The following is a 170-amino-acid chain: Mitotic-spindle organizing protein 2B (170 aa).

Disordered regions lie at residues 1–26 and 102–170; these read MSRGQTEGSQAMASSQAAGPGPSPDA and SADS…GSST. The span at 8–20 shows a compositional bias: low complexity; the sequence is GSQAMASSQAAGP. A compositionally biased stretch (polar residues) spans 123–132; sequence PNPTTSTTQG. Residues 151–170 are compositionally biased toward low complexity; the sequence is SGSRMQKSSSSGKSSGGSST.

This sequence belongs to the MOZART2 family. Part of the gamma-tubulin complex. Interacts with TUBG1.

The protein localises to the cytoplasm. Its subcellular location is the cytoskeleton. It is found in the microtubule organizing center. It localises to the centrosome. The protein resides in the spindle. In Xenopus tropicalis (Western clawed frog), this protein is Mitotic-spindle organizing protein 2B (mzt2b).